The chain runs to 434 residues: Eukaryotic translation initiation factor 3 subunit E (434 aa).

The PCI domain occupies 219–392; that stretch reads FFNHPKGRDL…GHVVMGTQPL (174 aa).

Belongs to the eIF-3 subunit E family. Component of the eukaryotic translation initiation factor 3 (eIF-3) complex. The eIF-3 complex interacts with pix. Interacts with mxt.

It localises to the cytoplasm. Component of the eukaryotic translation initiation factor 3 (eIF-3) complex, which is involved in protein synthesis of a specialized repertoire of mRNAs and, together with other initiation factors, stimulates binding of mRNA and methionyl-tRNAi to the 40S ribosome. The eIF-3 complex specifically targets and initiates translation of a subset of mRNAs involved in cell proliferation. In Drosophila virilis (Fruit fly), this protein is Eukaryotic translation initiation factor 3 subunit E (eIF3-S6).